The chain runs to 18141 residues: Titin (18141 aa).

Positions 1–31 (MQRQNPNPYQQQNQQHQQVQQFSSQEYSHSS) are enriched in low complexity. The disordered stretch occupies residues 1 to 69 (MQRQNPNPYQ…QHHGGSIGGA (69 aa)). The span at 32 to 47 (QEQHQEQRISRTEQHV) shows a compositional bias: basic and acidic residues. Residues 48-62 (QRSQVTTQRQVQQHH) show a composition bias toward low complexity. 17 consecutive Ig-like domains span residues 86-177 (PPVF…VYIQ), 255-343 (PQIS…AVLA), 372-461 (PAFV…AQLN), 471-559 (PQFV…ARLY), 618-708 (PQFI…AILS), 751-842 (PQFI…SSIR), 890-981 (PQFK…AQLT), 1024-1115 (PRFL…ATMI), 1158-1249 (PVFV…ACVR), 1291-1381 (PQFT…CSVR), 1424-1515 (PRFL…VELQ), 1558-1643 (PVFT…EAIT), 1691-1781 (PVFT…ASLI), 1824-1917 (PVFV…LNVT), 1958-2050 (PQFG…VNVT), 2089-2180 (PIFL…CNVR), and 2222-2313 (PHFT…TNLR). The interval 236–266 (EQDSQLSQELDRNQGPAQAPQISQKPRSSKL) is disordered. Cysteines 393 and 445 form a disulfide. Disulfide bonds link Cys-1312/Cys-1365, Cys-1446/Cys-1499, and Cys-1579/Cys-1632. Cysteines 1846 and 1899 form a disulfide. Cys-2111 and Cys-2164 are joined by a disulfide. The span at 2338 to 2347 (STAPHQRQEP) shows a compositional bias: basic and acidic residues. Positions 2338–2357 (STAPHQRQEPETPGTRQRPV) are disordered. 3 Ig-like domains span residues 2356–2449 (PVFT…MRVV), 2488–2581 (PIFT…MKVK), and 2622–2715 (PVFT…LKIE). The interval 2731 to 2750 (PRIGELEAPKEGRPEAPEPT) is disordered. Basic and acidic residues predominate over residues 2734–2746 (GELEAPKEGRPEA). Ig-like domains are found at residues 2754–2844 (PVFI…GTLK), 2891–2983 (PPVW…TTIF), 3029–3116 (PRFT…AEIS), 3130–3221 (PRFT…TTLN), 3263–3354 (PKFI…ASLK), 3401–3494 (PVFT…MKIQ), 3539–3625 (PEFI…ATVS), 3676–3767 (PKFT…AKVT), and 3811–3901 (PKFT…ATVS). Cys-2775 and Cys-2828 form a disulfide bridge. The cysteines at positions 3152 and 3205 are disulfide-linked. Disulfide bonds link Cys-3560–Cys-3613, Cys-3698–Cys-3751, and Cys-3832–Cys-3885. Residues 3910–3944 (LQNQVPRGMKRSDALTQMEATIKKYTSEVHLTEDD) form a TPR 1 repeat. Ig-like domains follow at residues 3954–4047 (PRFV…IKVS) and 4092–4181 (PVFV…LKVV). Cys-3976 and Cys-4029 form a disulfide bridge. Residues 4204-4229 (AAYQKERQENELEKVFDERKQVLSEQ) adopt a coiled-coil conformation. Disordered stretches follow at residues 4226-4254 (LSEQSSHTLKGVEHLKPKQYKPPTPDWQQ) and 4299-4336 (SSQAKGMAQSYEENLQEKTSTTEVQAAPPKGIAQPSES). The segment covering 4309–4322 (YEENLQEKTSTTEV) has biased composition (polar residues). 4 Ig-like domains span residues 4394-4482 (PVFT…ANLV), 4497-4585 (PSFV…GDCI), 4604-4692 (PHIV…AQLK), and 4703-4791 (PTIT…AKLT). One copy of the TPR 2 repeat lies at 4403-4438 (CRVFENEQAKFEVEFEGEPNPTVKWYRESFPIQNSP). A disulfide bridge connects residues Cys-4625 and Cys-4676. Disordered stretches follow at residues 4803–4891 (RTID…DKGV), 5318–5368 (DELV…QPEP), 5413–5648 (RVIP…EVDA), 5667–5701 (IKKTKRPKSTKEVTEELFEEQPEEEISPEEEVPQK), 5718–5748 (KKTKKPKLTQQVTEEETPHEEIIKESEEVVQ), 5775–5982 (KEEE…QRLL), 6034–6350 (KRVK…MPVD), and 6364–6393 (EEEVVPTEETPEAKQKAHKKRTKRLKEASV). Residues 4822–4841 (PESPHAFQPGQQPGQQFGQF) are compositionally biased toward low complexity. Basic residues predominate over residues 4852 to 4863 (GRSRQKKPKVRS). 5 stretches are compositionally biased toward basic and acidic residues: residues 5344-5357 (QPQEKTFEEAHDEL), 5436-5447 (RPKEAVKAEEIQ), 5541-5552 (QKPDEQKQELPK), 5591-5621 (IEEKLDVAPTKTYEKAVDVLPDEPKVEEKPE), and 5633-5645 (PKSEPTEEVHPDE). The TPR 3 repeat unit spans residues 5575 to 5613 (PVLWERKKKKPQPQDVIEEKLDVAPTKTYEKAVDVLPDE). The span at 5681–5697 (EELFEEQPEEEISPEEE) shows a compositional bias: acidic residues. 2 stretches are compositionally biased toward acidic residues: residues 5779 to 5792 (IPTEETVEEEETAE) and 5818 to 5860 (DVEE…QDEI). Over residues 5865–5874 (RKVKKAKKPK) the composition is skewed to basic residues. Acidic residues predominate over residues 5883-5904 (EIEEDQPEEEVLQEEIIGEQEE). Over residues 5910-5920 (RKVKSIKKPKK) the composition is skewed to basic residues. Basic and acidic residues predominate over residues 5921–5971 (VVTEKTVDQTEQPEKPEESQAEEVKETVTEEPKKPKPAPEEAKVEQVEKIS). Basic residues predominate over residues 6034 to 6043 (KRVKKKKPKT). Over residues 6049-6079 (ESTEEPAEETEEFEEEATQPEEVQPVEEIPE) the composition is skewed to acidic residues. 6 stretches are compositionally biased toward basic and acidic residues: residues 6081-6092 (PQVKEVADERKT), 6099-6133 (RKEEIIEKVEEVALKRVTRPKKELPQEATIEEVRL), 6141-6169 (IKPEEVKLEEVDLQHVEKKEDEIVQEEKR), 6195-6209 (EAEHIELEKQPKPEE), 6217-6234 (KRGEKKQPVEEVLEEKKW), and 6259-6268 (PIEEQQKPEK). A compositionally biased stretch (acidic residues) spans 6281–6290 (PESEEEELEL). The segment covering 6291-6306 (EPLKLPEDKKPKEPKA) has biased composition (basic and acidic residues). Residues 6307–6318 (KKEKKKKPKLKK) are compositionally biased toward basic residues. 2 stretches are compositionally biased toward acidic residues: residues 6325–6349 (EVSEEVAEPFDEPIAEEDEVEEMPV) and 6364–6373 (EEEVVPTEET). Ig-like domains lie at 6536 to 6624 (PRIT…TNII), 6633 to 6728 (PQFT…NILS), 6741 to 6830 (PTVT…VVVS), 6841 to 6929 (PRFI…ATVN), 6942 to 7034 (PRFV…VKIQ), 7066 to 7151 (PKII…VAVT), and 7189 to 7279 (PSLL…FDIS). A disulfide bridge links Cys-6557 with Cys-6608. The cysteines at positions 6964 and 7016 are disulfide-linked. Positions 7621 to 7663 (KIQVQTKQIAQMNTKIKKHKKHKQQEQEVSETTIQCEQKETLA) form a coiled coil. Disordered regions lie at residues 7773–7793 (AKTAESSKELPSKIPKSVKAQ), 9414–9440 (EEDDKQPETTVTVEEVPYEEEKPEEIQ), 9485–9510 (EEDDKQPETTVTVEEVPYEEEKPEEI), 9556–9582 (EEDDKQPETTVTVEEVPYEEEKPEEIQ), 9627–9652 (EEDDKQPETTVTVEEVPYEEEKPEEI), 9698–9724 (EEDDKQPETTVTVEEVPYEEEKPEEIQ), 9769–9796 (EEDDKQPETTVTVEEVPYEEEKPEEIQE), 9838–9865 (TAEEDDKQPETTVTVEEVPYEEEKPEEI), 9911–9937 (EEDDKQPETTVTVEEVPYEEEKPEEIQ), 9982–10008 (EEDDKQPETTVTVEEVPYEEEKPEEIQ), 10053–10080 (EEDDKQPETTVTVEEVPYEEEKPEEIQE), 10125–10149 (ENDKQPETTVTVEEVPYEEEKPEEI), 10195–10220 (EEDDKQPKTTVTVEEVPYEEEKPEEI), 10266–10291 (EEDDKQPETTVTVEEVPYEEEKPEEI), 10337–10364 (EEDDKQPETTVTVEEVPYEEEKPEEIQE), 10408–10433 (EEDDKQPETTVTVEEVPYEEEKPEEI), 10479–10504 (EEDDKQPETTVTVEEVPYEEEKPEEI), 10550–10576 (EEDDKQPETTVTVEEVPYEEEKPEEIQ), 10621–10648 (EEDDKQPETTVTVEEVPYEEEKPEEIQE), 10692–10717 (EEDDKQPETTVTVEEVPYEEEKPEEI), 10763–10788 (EEDDKQPETTVTVEEVPYEEEKPEEI), 10834–10860 (EEDDKQPETTVTVEEVPYEEEKPEEIQ), 10905–10932 (EEDDKQPETTVTVEEVPYEEEKPEEIQE), 11047–11073 (EEDDKQPETTVTVEEVPYEEEKPEEIQ), 11118–11143 (EEDDKQPETTVTVEEVPYEEEKPEEI), 11189–11216 (EEDDKQPETTVTVEEVPYEEEKPEEIQE), 11260–11286 (EEDDKQPETTVTVEEVPYEEEKPEEIQ), 11679–11703 (EELDENKKPKKKTTKTRTFKKRGPD), and 11767–11795 (TEPEEASADALQKPTKDKTPKQKKTLETP). A compositionally biased stretch (basic and acidic residues) spans 7774–7783 (KTAESSKELP). Composition is skewed to acidic residues over residues 9429–9440 (VPYEEEKPEEIQ), 9500–9510 (VPYEEEKPEEI), 9571–9582 (VPYEEEKPEEIQ), 9642–9652 (VPYEEEKPEEI), 9713–9724 (VPYEEEKPEEIQ), 9784–9796 (VPYEEEKPEEIQE), 9855–9865 (VPYEEEKPEEI), 9926–9937 (VPYEEEKPEEIQ), 9997–10008 (VPYEEEKPEEIQ), 10068–10080 (VPYEEEKPEEIQE), 10139–10149 (VPYEEEKPEEI), 10210–10220 (VPYEEEKPEEI), 10281–10291 (VPYEEEKPEEI), 10352–10364 (VPYEEEKPEEIQE), 10423–10433 (VPYEEEKPEEI), 10494–10504 (VPYEEEKPEEI), 10565–10576 (VPYEEEKPEEIQ), 10636–10648 (VPYEEEKPEEIQE), 10707–10717 (VPYEEEKPEEI), 10778–10788 (VPYEEEKPEEI), 10849–10860 (VPYEEEKPEEIQ), 10920–10932 (VPYEEEKPEEIQE), 11062–11073 (VPYEEEKPEEIQ), 11133–11143 (VPYEEEKPEEI), 11204–11216 (VPYEEEKPEEIQE), and 11275–11286 (VPYEEEKPEEIQ). Over residues 11686–11699 (KPKKKTTKTRTFKK) the composition is skewed to basic residues. Basic and acidic residues predominate over residues 11780-11792 (PTKDKTPKQKKTL). One copy of the TPR 4 repeat lies at 11872–11905 (KTVLQPYQRTEMELPQRARRDSSFKQPVKLTPMK). Disordered regions lie at residues 12003–12201 (FKHS…ADTK), 12451–12471 (TLQVGVTEHEPTKKLKTKKPE), 12685–12767 (TVDD…LPGP), 12943–12971 (IDHENAEEAPKVLKSKVSEEKPKSKKEKS), 13131–13154 (IKKKKVSPKHGPKEQVFEITETRP), 13325–13349 (QSFESPEPTEGEAHETKTKTKKPKK), 13471–13492 (EEYEPTEMDSKKKPKKKVKSHN), 13554–13576 (EADKPIKQPTQDQPIKKEKPLKK), 13702–13792 (KVQK…KSPD), 13891–13914 (EEVQEKSKEAPEEKKAKTVRKAKK), 13951–13994 (MKRK…DEPK), 14073–14094 (TTVPTETPDQDQPSVKQKRTKK), 14109–14322 (EEEA…QVTT), 14354–14377 (EYEPEPVNQDEKPKEPKKKTRKVK), 14414–14448 (PLDSPIDVLDESPKEVQKKDKKSRSTKVPNEETPV), 14533–14566 (EPEIASPQSIEEHPEQSKEKLAPKPKKTVRKVKK), 14583–14720 (KVDL…SELP), and 14756–14789 (VEESQPIVEEVEDEEPQPATEETVEDVTKPKSKK). Basic and acidic residues-rich tracts occupy residues 12022-12035 (ESDHSDKSNKELLH), 12044-12054 (EKIETPDESRK), 12124-12134 (MERTSDIREES), 12183-12201 (LNLRKRQGERPDDDKADTK), 12457-12471 (TEHEPTKKLKTKKPE), and 12685-12709 (TVDDVRVPKDKKKKIDNQKKIKISE). The segment covering 12731-12741 (HDEDLQTDEYS) has biased composition (acidic residues). The span at 12750 to 12760 (KSKKKSTKKQK) shows a compositional bias: basic residues. Positions 13141 to 13154 (GPKEQVFEITETRP) are enriched in basic and acidic residues. A compositionally biased stretch (basic residues) spans 13482 to 13492 (KKPKKKVKSHN). The stretch at 13566-13599 (QPIKKEKPLKKKKDVEYPVSLEAFDHTVKVVSEP) is one TPR 5 repeat. Positions 13733-13747 (LVKEDLDQPIERALE) are enriched in basic and acidic residues. The span at 13771 to 13781 (PKPKKISKPKS) shows a compositional bias: basic residues. Basic and acidic residues-rich tracts occupy residues 13893 to 13906 (VQEKSKEAPEEKKA) and 13975 to 13984 (EDKPVEKISE). A compositionally biased stretch (basic and acidic residues) spans 14221 to 14240 (TVEKPLEALHTDSDLEKPDV). Residues 14264–14274 (KISSEQPKQPS) are compositionally biased toward low complexity. Positions 14282-14294 (VTEHDLKPEEEKP) are enriched in basic and acidic residues. Over residues 14542–14554 (IEEHPEQSKEKLA) the composition is skewed to basic and acidic residues. The span at 14555-14564 (PKPKKTVRKV) shows a compositional bias: basic residues. Residues 14583–14599 (KVDLEKYEKVEMPEKPV) are compositionally biased toward basic and acidic residues. Positions 14652–14662 (ETTVDTTDIPE) are enriched in low complexity. Polar residues predominate over residues 14664–14683 (TPTQTAQPEDTATAQITPSA). Over residues 14684–14697 (QEEKSTQDDTKDTI) the composition is skewed to basic and acidic residues. The segment covering 14756–14771 (VEESQPIVEEVEDEEP) has biased composition (acidic residues). The stretch at 14904–14936 (IPKTTDIGAIKDNGELSRNIEEAEEILKFKPHK) is one TPR 6 repeat. Disordered stretches follow at residues 14956 to 15208 (EKYI…VSVK), 15301 to 15329 (TRKKKPKPQQPEEFEVTLKEPKEEQIQPD), 15425 to 15448 (ISETQSIEEKPIEVAEEAPEETPK), 15578 to 15597 (IRVSESEPKPEEPSVEQFTV), 15697 to 15722 (EKPAEAIVEEEEPVVTEPIEEAPKPE), 15825 to 15876 (EEPK…VEEP), 15951 to 15973 (ESQPEAVEDKEVSLPKKKPKAPI), and 16181 to 16206 (QEEEYEEGEDIEEFVVSQQRKPKPLQ). 10 stretches are compositionally biased toward basic and acidic residues: residues 14967-14989 (EKTPYKKPEKAPKPEEKQEDVKL), 15024-15046 (ELKQKPKEVEIVEEQTKKPKDGE), 15069-15080 (QIEHPEIPEKVK), 15088-15097 (KPKDKSKSEP), 15109-15139 (PKEEEAIPEQDVKFRKPERDAPEETDSEIKL), 15169-15179 (IEDKAIDDEKK), 15189-15198 (QPKEQEIAKE), 15316-15325 (VTLKEPKEEQ), 15425-15437 (ISETQSIEEKPIE), and 15578-15589 (IRVSESEPKPEE). Positions 15703-15716 (IVEEEEPVVTEPIE) are enriched in acidic residues. The span at 15951-15964 (ESQPEAVEDKEVSL) shows a compositional bias: basic and acidic residues. Acidic residues predominate over residues 16183 to 16193 (EEYEEGEDIEE). One can recognise an SH3 domain in the interval 16409–16470 (ENLNIMYSIC…PAQYLMEPEE (62 aa)). Ig-like domains lie at 16501 to 16590 (PRFI…TELI), 16625 to 16719 (PTFS…ITLK), 16728 to 16811 (PQIL…ANLT), 16822 to 16916 (PPLF…VEVD), 16919 to 17001 (TFTK…STVE), 17007 to 17091 (PDFI…CELV), 17097 to 17180 (PEIV…AKLT), 17184 to 17270 (PLVD…TKLC), and 17277 to 17363 (PPVI…AEAS). The cysteines at positions 16940 and 16989 are disulfide-linked. The Fibronectin type-III 1 domain maps to 17374-17467 (APGTPQPLEI…LSPPIRLVPK (94 aa)). Ig-like domains follow at residues 17473–17558 (PSVQ…CRLK) and 17563–17653 (PVLE…CTVQ). A disulfide bridge connects residues Cys-17494 and Cys-17542. 4 Fibronectin type-III domains span residues 17660-17755 (RPQS…TKKF), 17760-17861 (PPRG…TPPS), 17862-17958 (PPQN…THAS), and 17982-18078 (PPTG…AMTA). The stretch at 17694–17728 (LEKCDVQNNVWMKVSDFNKDIKSYAVQKLSMNAQY) is one TPR 7 repeat. Residues 17741–17771 (SEPTESDPVTITKKFEKPSPPRGPTTVSGMN) are disordered.

It belongs to the protein kinase superfamily. CAMK Ser/Thr protein kinase family. As to quaternary structure, interacts with Msp300; this interaction mediates the recruitment of Msp300 to the Z-disks. Expressed in the mesoderm at stage 11, several hours before myoblast fusion, and persists in most muscle cells, somatic, visceral and pharyngeal muscles and their precursors, until the third instar. Isoform A: Expressed in the indirect flight muscle (at protein level).

It localises to the cytoplasm. It is found in the nucleus. The protein resides in the chromosome. Its subcellular location is the myofibril. The protein localises to the sarcomere. It localises to the z line. Key component in the assembly and functioning of adult and embryonic striated muscles and muscle tendons. By providing connections at the level of individual microfilaments, it contributes to the fine balance of forces between the two halves of the sarcomere. The size and extensibility of the cross-links are the main determinants of sarcomere extensibility properties of muscle. In non-muscle cells, seems to play a role in chromosome condensation and chromosome segregation during mitosis. Might link the lamina network to chromatin or nuclear actin, or both during interphase. The sequence is that of Titin (sls) from Drosophila melanogaster (Fruit fly).